A 92-amino-acid polypeptide reads, in one-letter code: Cell division protein FtsB (92 aa).

Topologically, residues 1-3 (MKV) are cytoplasmic. A helical membrane pass occupies residues 4-21 (VPILLFVLLAALQYRLWF). Residues 22 to 92 (GKNSIPEYVA…TFYRILPSEE (71 aa)) lie on the Periplasmic side of the membrane. The stretch at 31-74 (AMEKSVAEQAEQNTELLQRNNLLKADIQDLKVGLEAVEERARNE) forms a coiled coil.

The protein belongs to the FtsB family. Part of a complex composed of FtsB, FtsL and FtsQ.

It is found in the cell inner membrane. Functionally, essential cell division protein. May link together the upstream cell division proteins, which are predominantly cytoplasmic, with the downstream cell division proteins, which are predominantly periplasmic. The protein is Cell division protein FtsB of Pseudoalteromonas atlantica (strain T6c / ATCC BAA-1087).